The sequence spans 1297 residues: Cingulin-like protein 1 (1297 aa).

Residues Met-1–Thr-550 are head. Residues Ala-37 to Gly-51 carry the ZIM motif. Ser-113, Ser-203, and Ser-257 each carry phosphoserine. Disordered stretches follow at residues Asn-161–Asp-208, Gly-245–Ser-306, Lys-364–Phe-396, and Gln-428–Val-467. Polar residues predominate over residues Tyr-197–Ser-206. Residues Glu-268–Asp-283 show a composition bias toward basic and acidic residues. 3 positions are modified to phosphoserine: Ser-284, Ser-298, and Ser-299. Residues Ser-297 to Ser-306 show a composition bias toward low complexity. The span at Leu-367–Arg-378 shows a compositional bias: basic residues. A compositionally biased stretch (basic and acidic residues) spans Ile-379–Ser-389. Ser-389 and Ser-392 each carry phosphoserine. Ser-482 bears the Phosphoserine mark. Residues Ser-586–Leu-608 form a disordered region. The span at Ala-592 to Leu-608 shows a compositional bias: polar residues. Positions Glu-604–Lys-1251 form a coiled coil. Phosphoserine is present on residues Ser-678 and Ser-704. Positions Ser-1259 to Ile-1297 are tail.

The protein belongs to the cingulin family. In terms of assembly, homodimer or oligomer. Interacts with CD2AP and SH3BP1; probably part of a complex at cell junctions. Widely expressed. Highly expressed in the kidney and lung.

It localises to the cell junction. The protein resides in the tight junction. Its function is as follows. May be involved in anchoring the apical junctional complex, especially tight junctions, to actin-based cytoskeletons. The sequence is that of Cingulin-like protein 1 from Mus musculus (Mouse).